Here is a 200-residue protein sequence, read N- to C-terminus: Small ribosomal subunit protein uS4 (200 aa).

The segment at 22–43 (TGKELERRPYAPGQHGPTQRKK) is disordered. The region spanning 92–170 (QRLDNIVYRL…VPEYVTFDAE (79 aa)) is the S4 RNA-binding domain.

This sequence belongs to the universal ribosomal protein uS4 family. Part of the 30S ribosomal subunit. Contacts protein S5. The interaction surface between S4 and S5 is involved in control of translational fidelity.

Functionally, one of the primary rRNA binding proteins, it binds directly to 16S rRNA where it nucleates assembly of the body of the 30S subunit. Its function is as follows. With S5 and S12 plays an important role in translational accuracy. In Listeria monocytogenes serotype 4b (strain F2365), this protein is Small ribosomal subunit protein uS4.